The sequence spans 348 residues: 4-hydroxyphenylpyruvate dioxygenase (348 aa).

VOC domains lie at 11-141 (GFAF…ITSP) and 151-303 (AIDH…IFTE). Positions 154, 232, and 312 each coordinate Fe cation.

Belongs to the 4HPPD family. Requires Fe cation as cofactor.

It catalyses the reaction 3-(4-hydroxyphenyl)pyruvate + O2 = homogentisate + CO2. In terms of biological role, catalyzes the transformation of p-hydroxyphenylpyruvate into HGA. Has hemolytic and brown pigment production activity. In Legionella pneumophila subsp. pneumophila (strain Philadelphia 1 / ATCC 33152 / DSM 7513), this protein is 4-hydroxyphenylpyruvate dioxygenase (lly).